We begin with the raw amino-acid sequence, 116 residues long: Acyl-CoA-binding protein homolog 3 (116 aa).

The ACB domain maps to 3 to 92 (LQEKFDAAVE…LNDMFDKIAE (90 aa)). Residues 34–38 (YSLFK), Lys-60, and Tyr-79 each bind an acyl-CoA.

This sequence belongs to the ACBP family.

Binds medium- and long-chain acyl-CoA esters with very high affinity and may function as an intracellular carrier of acyl-CoA esters. This is Acyl-CoA-binding protein homolog 3 (acbp-3) from Caenorhabditis elegans.